An 85-amino-acid chain; its full sequence is Small ribosomal subunit protein uS17 (85 aa).

Belongs to the universal ribosomal protein uS17 family. In terms of assembly, part of the 30S ribosomal subunit.

One of the primary rRNA binding proteins, it binds specifically to the 5'-end of 16S ribosomal RNA. The sequence is that of Small ribosomal subunit protein uS17 from Desulfosudis oleivorans (strain DSM 6200 / JCM 39069 / Hxd3) (Desulfococcus oleovorans).